We begin with the raw amino-acid sequence, 189 residues long: Probable nicotinate-nucleotide adenylyltransferase (189 aa).

The protein belongs to the NadD family.

The enzyme catalyses nicotinate beta-D-ribonucleotide + ATP + H(+) = deamido-NAD(+) + diphosphate. It functions in the pathway cofactor biosynthesis; NAD(+) biosynthesis; deamido-NAD(+) from nicotinate D-ribonucleotide: step 1/1. Functionally, catalyzes the reversible adenylation of nicotinate mononucleotide (NaMN) to nicotinic acid adenine dinucleotide (NaAD). The chain is Probable nicotinate-nucleotide adenylyltransferase from Bacillus cereus (strain ATCC 10987 / NRS 248).